The sequence spans 230 residues: MAKRGKKYVEAAKLVDRAAAYSATEAVELVKKTNTAKFDATVEAAFRLGVDPKKADQQIRGAVVLPHGTGKVQRVLVFAKGEKAKEAEAAGADFVGDADYIGKIQQGWFDFDVVVATPDMMGEVGKLGRVLGPKGLMPNPKTGTVTFDVTKAVNEIKAGKVEYRVDKAGNIHVPIGKVSFEDAKLVENFRTIADTLQKVKPAAAKGTYMKNVTVASTMGPGVRVDVSTLA.

This sequence belongs to the universal ribosomal protein uL1 family. In terms of assembly, part of the 50S ribosomal subunit.

In terms of biological role, binds directly to 23S rRNA. The L1 stalk is quite mobile in the ribosome, and is involved in E site tRNA release. Its function is as follows. Protein L1 is also a translational repressor protein, it controls the translation of the L11 operon by binding to its mRNA. This is Large ribosomal subunit protein uL1 from Bacillus anthracis (strain A0248).